The following is a 95-amino-acid chain: MKITRTDVEHVATLARLELTEDEKDRFTGQLDAILAYVEKLNELDTDGIIPTSHAVPVENAFREDEVRPSIGVENALANAPDRVEGFFRVPRVIE.

The protein belongs to the GatC family. In terms of assembly, heterotrimer of A, B and C subunits.

It carries out the reaction L-glutamyl-tRNA(Gln) + L-glutamine + ATP + H2O = L-glutaminyl-tRNA(Gln) + L-glutamate + ADP + phosphate + H(+). The enzyme catalyses L-aspartyl-tRNA(Asn) + L-glutamine + ATP + H2O = L-asparaginyl-tRNA(Asn) + L-glutamate + ADP + phosphate + 2 H(+). In terms of biological role, allows the formation of correctly charged Asn-tRNA(Asn) or Gln-tRNA(Gln) through the transamidation of misacylated Asp-tRNA(Asn) or Glu-tRNA(Gln) in organisms which lack either or both of asparaginyl-tRNA or glutaminyl-tRNA synthetases. The reaction takes place in the presence of glutamine and ATP through an activated phospho-Asp-tRNA(Asn) or phospho-Glu-tRNA(Gln). In Geobacter sulfurreducens (strain ATCC 51573 / DSM 12127 / PCA), this protein is Aspartyl/glutamyl-tRNA(Asn/Gln) amidotransferase subunit C.